The sequence spans 600 residues: MQDNLIYLANCFLNEAIKTTLQNLNKVNIIDTPELYSFVKGINTDYQFNKSTKLANDCNLDKEKIVNELITQLKSNSFFENISSVELEQNKSVKINGKKTNTVIKQIMITLNISKLYLSNRINLLYKRILSGSSIYVPNTITKKIIVDYSSPNIAKEMHIGHLRSTIIGESICRVLEMCGHDVYRINHVGDWGTQFGMLIAYIKNNQIESYTISELMNIYKESRKLFESSIDFKNQSRLETVSLQNGNIESITIWQKIHKISMNSFHEIYSLLGINNLITKGESFYQDQMTELVNSLTSDNKITVENDMKLMFVEGISKPFILQKSDGGFTYDTSDLTALKYRLFIEKADHIIYVVDSSQQEHFSQMFQIAEKLDWIKNQQLQHIGFGLVLGSDGSKLKTRSGETIKLQDVIDNVVSHASNITRELIKQKNLDWNDDDILTISKKIAINCIKYSDLNNPRLNNYKFDINKMLNSKGNTAVYLMYGLARCKSILRKVPNNTVLNGDIIIENENSRNLLLHVLKYVEVIDQTVETMCPHYLCIYLYDLIGSLTKFYTTNRCLEYDNDNLIGYNANNLRIVNMVKIIISKIFELIGLEEIEQL.

Residues 151–153 (SPN), H162, Y332, D336, and Q360 each bind L-arginine. A 'HIGH' region motif is present at residues 152 to 162 (PNIAKEMHIGH).

It belongs to the class-I aminoacyl-tRNA synthetase family.

It carries out the reaction tRNA(Arg) + L-arginine + ATP = L-arginyl-tRNA(Arg) + AMP + diphosphate. This is Arginine--tRNA ligase (RARS) from Acanthamoeba polyphaga mimivirus (APMV).